A 476-amino-acid chain; its full sequence is Glycogen synthase (476 aa).

Lys15 is an ADP-alpha-D-glucose binding site.

Belongs to the glycosyltransferase 1 family. Bacterial/plant glycogen synthase subfamily.

It catalyses the reaction [(1-&gt;4)-alpha-D-glucosyl](n) + ADP-alpha-D-glucose = [(1-&gt;4)-alpha-D-glucosyl](n+1) + ADP + H(+). It functions in the pathway glycan biosynthesis; glycogen biosynthesis. Synthesizes alpha-1,4-glucan chains using ADP-glucose. The sequence is that of Glycogen synthase from Leptospira biflexa serovar Patoc (strain Patoc 1 / Ames).